The chain runs to 196 residues: GTP cyclohydrolase 1 (196 aa).

Zn(2+) is bound by residues C86, H89, and C157.

This sequence belongs to the GTP cyclohydrolase I family. As to quaternary structure, toroid-shaped homodecamer, composed of two pentamers of five dimers.

The catalysed reaction is GTP + H2O = 7,8-dihydroneopterin 3'-triphosphate + formate + H(+). Its pathway is cofactor biosynthesis; 7,8-dihydroneopterin triphosphate biosynthesis; 7,8-dihydroneopterin triphosphate from GTP: step 1/1. The polypeptide is GTP cyclohydrolase 1 (Parabacteroides distasonis (strain ATCC 8503 / DSM 20701 / CIP 104284 / JCM 5825 / NCTC 11152)).